Consider the following 308-residue polypeptide: Taste receptor type 2 member 41 (308 aa).

Over M1–S6 the chain is Extracellular. Residues V7–I27 form a helical membrane-spanning segment. The Cytoplasmic portion of the chain corresponds to V28–C60. A helical transmembrane segment spans residues V61–A81. Topologically, residues R82–D90 are extracellular. The helical transmembrane segment at F91–I111 threads the bilayer. At A112–A128 the chain is on the cytoplasmic side. Residues L129–F149 form a helical membrane-spanning segment. Residues W150 to P184 are Extracellular-facing. Residues N152 and N167 are each glycosylated (N-linked (GlcNAc...) asparagine). A helical membrane pass occupies residues L185–I205. Residues N206–S239 are Cytoplasmic-facing. Residues F240 to S260 traverse the membrane as a helical segment. Over S261 to V264 the chain is Extracellular. A helical transmembrane segment spans residues W265 to I285. At T286–T308 the chain is on the cytoplasmic side.

It belongs to the G-protein coupled receptor T2R family. As to expression, expressed in subsets of taste receptor cells of the tongue and palate epithelium and exclusively in gustducin-positive cells. Expressed in 15% taste bud cells in circumvallate and foliate papillae but only in 2% in fungiform papillae. Expressed in the duodenum, antrum and fundus (part of the stomach).

The protein localises to the membrane. Its function is as follows. Receptor that may play a role in the perception of bitterness and is gustducin-linked. May play a role in sensing the chemical composition of the gastrointestinal content. The activity of this receptor may stimulate alpha gustducin, mediate PLC-beta-2 activation and lead to the gating of TRPM5. In Rattus norvegicus (Rat), this protein is Taste receptor type 2 member 41 (Tas2r41).